The following is a 367-amino-acid chain: RYamide receptor (367 aa).

Residues 1 to 35 (MDANTTRNESFSLDCELVNPNSTLANVYFLSAVYS) lie on the Extracellular side of the membrane. Residues Asn4, Asn8, and Asn21 are each glycosylated (N-linked (GlcNAc...) asparagine). The chain crosses the membrane as a helical span at residues 36–56 (MYAIIFVVALIGNSFVCYIVL). Over 57–66 (SSPPMRTVTN) the chain is Cytoplasmic. The chain crosses the membrane as a helical span at residues 67 to 87 (FFILNLAIGDVLITLLCVPFT). Residues 88–113 (SVSLLMQYWPFGGILCPVVNYSQALS) are Extracellular-facing. Asn107 carries an N-linked (GlcNAc...) asparagine glycan. The chain crosses the membrane as a helical span at residues 114 to 134 (VFVSAYTLVAISIDKYMIIMW). At 135-143 (PLKPRISKR) the chain is on the cytoplasmic side. Residues 144-164 (FATYIIALVWLIAGITVLPSA) form a helical membrane-spanning segment. Residues 165–212 (TFTTLINDENILGTSAYEQCDKYICAEEYSKVGQEYGDLYTKVLMFLQ) lie on the Extracellular side of the membrane. The chain crosses the membrane as a helical span at residues 213-233 (YVIPSLVLLFTYTSIGVVIWC). The Cytoplasmic segment spans residues 234–258 (HRIPGEAENSRDQRIAKNKTKMIKM). The helical transmembrane segment at 259–279 (MVTVVCVYTICWLPYNVLMIF) threads the bilayer. At 280-282 (KEH) the chain is on the extracellular side. The chain crosses the membrane as a helical span at residues 283–303 (ISGSVMVYLYFPLHGLAMSHA). Topologically, residues 304–367 (CYNPIIYCYM…EITRAQPTSA (64 aa)) are cytoplasmic.

This sequence belongs to the G-protein coupled receptor 1 family.

Its subcellular location is the cell membrane. Receptor for the neuropeptides RYamide-1 and RYamide-2. The activity of this receptor is mediated by G proteins which activate a phosphatidyl-inositol-calcium second messenger system. RYamide-2 is the most potent activator. The polypeptide is RYamide receptor (Tribolium castaneum (Red flour beetle)).